We begin with the raw amino-acid sequence, 25 residues long: Fructokinase-1 (25 aa).

This sequence belongs to the ROK (NagC/XylR) family. Homodimer. Requires Mg(2+) as cofactor.

It catalyses the reaction D-fructose + ATP = D-fructose 6-phosphate + ADP + H(+). With respect to regulation, inhibition by zinc ions (Potential). Inactivated by EDTA. The protein is Fructokinase-1 of Lactococcus lactis subsp. lactis (Streptococcus lactis).